Reading from the N-terminus, the 336-residue chain is MQDQRELGGAAGQGLPLCAFLSDLPEQGGGVSLRQVSKDSGAPGRQSGDAVEWARLRCALPPPDGEARTSGGSCEGLSTSTARGPDPGEHSGAWGEFEVFQESSASSEQFCQSFELQERPAASQPWRTASAQKQHGSSQPHQGGVTGTGAIAASELVVSCEDVFRSAFQEVPVPQATEGISTLDHFLEARNEESSGLESAQKLCSESRKLWRALHNTGTMTISRCTWSESRSRENFLPVLGVDAAQKSLSGSPGRTLGEPGLHEPEELGFHLQRCRALIQTKLSGTPTGGQGSLITYSLFLKTPIHGNGQYITTPRKKKTFGPRNLKLTLFNSDIY.

Disordered stretches follow at residues 29–93 and 116–147; these read GGVS…HSGA and LQER…GVTG. 2 stretches are compositionally biased toward polar residues: residues 70–82 and 125–141; these read SGGS…TSTA and PWRT…SQPH.

This is an uncharacterized protein from Bos taurus (Bovine).